We begin with the raw amino-acid sequence, 512 residues long: Cobyric acid synthase (512 aa).

The region spanning 251 to 451 (ALDIAVIRLP…IHGLFDSHHF (201 aa)) is the GATase cobBQ-type domain. The active-site Nucleophile is cysteine 332. Histidine 443 is a catalytic residue.

The protein belongs to the CobB/CobQ family. CobQ subfamily.

It participates in cofactor biosynthesis; adenosylcobalamin biosynthesis. Functionally, catalyzes amidations at positions B, D, E, and G on adenosylcobyrinic A,C-diamide. NH(2) groups are provided by glutamine, and one molecule of ATP is hydrogenolyzed for each amidation. This is Cobyric acid synthase from Yersinia enterocolitica serotype O:8 / biotype 1B (strain NCTC 13174 / 8081).